A 414-amino-acid polypeptide reads, in one-letter code: 2,3-diketo-5-methylthiopentyl-1-phosphate enolase (414 aa).

The active-site Proton acceptor is lysine 99. Substrate-binding positions include lysine 148, 174–177, histidine 265, glycine 338, and 360–361; these read KDDE and GG. Mg(2+)-binding residues include lysine 174, aspartate 176, and glutamate 177. Lysine 174 is modified (N6-carboxylysine).

This sequence belongs to the RuBisCO large chain family. Type IV subfamily. Homodimer. Mg(2+) serves as cofactor.

The catalysed reaction is 5-methylsulfanyl-2,3-dioxopentyl phosphate = 2-hydroxy-5-methylsulfanyl-3-oxopent-1-enyl phosphate. Its pathway is amino-acid biosynthesis; L-methionine biosynthesis via salvage pathway; L-methionine from S-methyl-5-thio-alpha-D-ribose 1-phosphate: step 3/6. Catalyzes the enolization of 2,3-diketo-5-methylthiopentyl-1-phosphate (DK-MTP-1-P) into 2-hydroxy-3-keto-5-methylthiopentenyl-1-phosphate (HK-MTPenyl-1-P). The chain is 2,3-diketo-5-methylthiopentyl-1-phosphate enolase from Bacillus cereus (strain ZK / E33L).